We begin with the raw amino-acid sequence, 427 residues long: Transcobalamin-2 (427 aa).

Residues 1-18 (MRHLGALLFLLGVLGALA) form the signal peptide. Disulfide bonds link Cys-21–Cys-267, Cys-116–Cys-309, and Cys-165–Cys-205. Residues Gln-104, 152–156 (TSYYQ), His-190, 190–194 (HHSVD), Asn-242, Ser-245, Gln-291, and 395–397 (WQL) each bind cob(II)alamin.

The protein belongs to the eukaryotic cobalamin transport proteins family. As to quaternary structure, interacts with CD320 (via LDL-receptor class A domains).

Its subcellular location is the secreted. In terms of biological role, primary vitamin B12-binding and transport protein. Delivers cobalamin to cells. This is Transcobalamin-2 (TCN2) from Pongo abelii (Sumatran orangutan).